The sequence spans 375 residues: SAP-like protein BP-73 (375 aa).

Disordered regions lie at residues 46-113, 130-233, and 257-315; these read PNNH…VPGE, RARG…VKFQ, and TLEN…PSLQ. Positions 59-70 are enriched in basic residues; it reads HQKGGSARRKSK. Over residues 76-86 the composition is skewed to acidic residues; that stretch reads DDSENIDEFDT. The span at 88–109 shows a compositional bias: polar residues; that stretch reads IMSSKNGPPISLTSNSRPQATS. 2 stretches are compositionally biased toward basic and acidic residues: residues 134 to 152 and 163 to 186; these read KGKEEKKPEQAKAQGERGS and HSVDQRRKSGDEKEQSVDQTKRSN. Polar residues predominate over residues 187 to 197; it reads ESGNKQNSSIF. The segment covering 295-311 has biased composition (acidic residues); it reads DEPDASDTDEPSGEYDE. An interaction with WAXY region spans residues 338 to 375; the sequence is DLSTLKVTELRELAKSRGIKGYSKMKKNDLVELLSNMA.

As to quaternary structure, binds to the DNA in the promoter region of WAXY containing the sequence 5'-ACGCACGCTAACGTGA-3'. As to expression, expressed in tissues with high cell division activities: in root tips, stem node, panicle, flower and immature seed. Weakly expressed in root and leaf.

May regulate cell proliferation and plant growth. In Oryza sativa subsp. japonica (Rice), this protein is SAP-like protein BP-73 (BP-73).